We begin with the raw amino-acid sequence, 397 residues long: Mitochondrial inner membrane magnesium transporter LPE10 (397 aa).

The transit peptide at 1–37 (MLLVNRAITLNLVKRCCWRSTMFMTPKRFLGTSEEES) directs the protein to the mitochondrion. Residues 316–336 (LMLLGIRFSIGMLSLGGPIFI) form a helical membrane-spanning segment. Positions 340-343 (YGMN) match the YGMN motif. The helical transmembrane segment at 354-374 (GFIAASAIGMISLGALYFYSI) threads the bilayer.

The protein belongs to the CorA metal ion transporter (MIT) (TC 1.A.35) family. As to quaternary structure, forms homooligomers. Interacts with MRS2.

It is found in the mitochondrion inner membrane. In terms of biological role, mitochondrial inner membrane magnesium transporter required for mitochondrial magnesium homeostasis. Modulates the conductance of the MRS2 channel. Involved in the splicing of mRNA group II introns in mitochondria by affecting mitochondrial magnesium concentrations, which are critical for group II intron splicing. This is Mitochondrial inner membrane magnesium transporter LPE10 (LPE10) from Candida glabrata (strain ATCC 2001 / BCRC 20586 / JCM 3761 / NBRC 0622 / NRRL Y-65 / CBS 138) (Yeast).